Here is a 474-residue protein sequence, read N- to C-terminus: tRNA-2-methylthio-N(6)-dimethylallyladenosine synthase (474 aa).

Positions 3–120 (QKLHIKTWGC…LPEMINQIRG (118 aa)) constitute an MTTase N-terminal domain. C12, C49, C83, C157, C161, and C164 together coordinate [4Fe-4S] cluster. Residues 143-375 (RAEGPTAFVS…QERINQQAAQ (233 aa)) form the Radical SAM core domain. One can recognise a TRAM domain in the interval 378 to 441 (RRMLGTEQRV…TNSLRGEVVR (64 aa)).

Belongs to the methylthiotransferase family. MiaB subfamily. As to quaternary structure, monomer. [4Fe-4S] cluster is required as a cofactor.

It is found in the cytoplasm. The catalysed reaction is N(6)-dimethylallyladenosine(37) in tRNA + (sulfur carrier)-SH + AH2 + 2 S-adenosyl-L-methionine = 2-methylsulfanyl-N(6)-dimethylallyladenosine(37) in tRNA + (sulfur carrier)-H + 5'-deoxyadenosine + L-methionine + A + S-adenosyl-L-homocysteine + 2 H(+). Its function is as follows. Catalyzes the methylthiolation of N6-(dimethylallyl)adenosine (i(6)A), leading to the formation of 2-methylthio-N6-(dimethylallyl)adenosine (ms(2)i(6)A) at position 37 in tRNAs that read codons beginning with uridine. This chain is tRNA-2-methylthio-N(6)-dimethylallyladenosine synthase, found in Haemophilus influenzae (strain PittGG).